We begin with the raw amino-acid sequence, 605 residues long: Phosphoenolpyruvate carboxykinase (ATP) (605 aa).

Low complexity predominate over residues 27 to 48 (SGPSSSFINNNNSNNNNNKSSN). The interval 27–67 (SGPSSSFINNNNSNNNNNKSSNMFNHDHVNKTNLHPGGVKP) is disordered. An ATP-binding site is contributed by 307-314 (GLSGTGKT).

The protein belongs to the phosphoenolpyruvate carboxykinase (ATP) family.

It carries out the reaction oxaloacetate + ATP = phosphoenolpyruvate + ADP + CO2. It functions in the pathway carbohydrate biosynthesis; gluconeogenesis. The protein is Phosphoenolpyruvate carboxykinase (ATP) (acu-6) of Neurospora crassa (strain ATCC 24698 / 74-OR23-1A / CBS 708.71 / DSM 1257 / FGSC 987).